The primary structure comprises 160 residues: Transcription antitermination protein NusB (160 aa).

Belongs to the NusB family.

Functionally, involved in transcription antitermination. Required for transcription of ribosomal RNA (rRNA) genes. Binds specifically to the boxA antiterminator sequence of the ribosomal RNA (rrn) operons. This Sinorhizobium fredii (strain NBRC 101917 / NGR234) protein is Transcription antitermination protein NusB.